Consider the following 123-residue polypeptide: VQ motif-containing protein 29 (123 aa).

The tract at residues 24–55 (TKNYLTSLHSTRKQPSKPLKRPAISSPLNPMH) is disordered. Over residues 33 to 43 (STRKQPSKPLK) the composition is skewed to basic residues. The VQ motif lies at 66-75 (FKVLVQRLTG). Over residues 77–94 (PEHETVQAKPLKTSDDAA) the composition is skewed to basic and acidic residues. The disordered stretch occupies residues 77 to 123 (PEHETVQAKPLKTSDDAAKQSSSSFAFDPSSSWGDFSFQNPANISRW). The span at 97-108 (SSSSFAFDPSSS) shows a compositional bias: low complexity. The segment covering 109-123 (WGDFSFQNPANISRW) has biased composition (polar residues).

The protein localises to the nucleus. May function as negative regulator of flowering transition. The polypeptide is VQ motif-containing protein 29 (Arabidopsis thaliana (Mouse-ear cress)).